Here is a 303-residue protein sequence, read N- to C-terminus: Mitochondrial carrier homolog 2 (303 aa).

Position 2 is an N-acetylalanine (A2). The Mitochondrial intermembrane segment spans residues 2–15 (ADAASQVLLGSGLT). Solcar repeat units lie at residues 2–98 (ADAA…YQES) and 118–206 (DHVI…VNTY). Residues 16–36 (ILSQPLMYVKVLIQVGYEPLP) traverse the membrane as a helical segment. Residues 37–77 (PTIGRNIFGRQVCQLPGLFSYAQHIASIDGRRGLFTGLTPR) lie on the Cytoplasmic side of the membrane. The helical transmembrane segment at 78–92 (LCSGVLGTVVHGKVL) threads the bilayer. Topologically, residues 93-135 (QHYQESDKGEELGPGNVQKEVSSSFDHVIKETTREMIARSAAT) are mitochondrial intermembrane. A helical membrane pass occupies residues 136–156 (LITHPFHVITLRSMVQFIGRE). The Cytoplasmic segment spans residues 157–180 (SKYCGLCDSIITIYREEGILGFFA). Residues 181-199 (GLVPRLLGDILSLWLCNSL) traverse the membrane as a helical segment. Residues 200–231 (AYLVNTYALDSGVSTMNEMKSYSQAVTGFFAS) are Mitochondrial intermembrane-facing. A helical membrane pass occupies residues 232–252 (MLTYPFVLVSNLMAVNNCGLA). At 253–280 (GGCPPYSPIYTSWIDCWCMLQKEGNMSR) the chain is on the cytoplasmic side. The chain crosses the membrane as a helical span at residues 281–303 (GNSLFFRKVPFGKTYCCDLKMLI).

The protein belongs to the mitochondrial carrier (TC 2.A.29) family. As to quaternary structure, interacts with p15BID.

Its subcellular location is the mitochondrion outer membrane. Functionally, protein insertase that mediates insertion of transmembrane proteins into the mitochondrial outer membrane. Catalyzes insertion of proteins with alpha-helical transmembrane regions, such as signal-anchored, tail-anchored and multi-pass membrane proteins. Does not mediate insertion of beta-barrel transmembrane proteins. Also acts as a receptor for the truncated form of pro-apoptotic BH3-interacting domain death agonist (p15 BID) and has therefore a critical function in apoptosis. Regulates the quiescence/cycling of hematopoietic stem cells (HSCs). Acts as a regulator of mitochondrial fusion, essential for the naive-to-primed interconversion of embryonic stem cells (ESCs). Acts as a regulator of lipid homeostasis and has a regulatory role in adipocyte differentiation and biology. The protein is Mitochondrial carrier homolog 2 of Homo sapiens (Human).